The chain runs to 290 residues: Enoyl-CoA hydratase, mitochondrial (290 aa).

A mitochondrion-targeting transit peptide spans 1 to 29; the sequence is MAALRALLPRACNSLLSPVRCPEFRRFAS. 98–101 contacts substrate; that stretch reads ADIK. Residues Lys-101 and Lys-115 each carry the N6-acetyllysine; alternate modification. N6-succinyllysine; alternate is present on residues Lys-101 and Lys-115. Residue Gly-141 coordinates substrate. Lys-204 carries the post-translational modification N6-succinyllysine. At Lys-211 the chain carries N6-acetyllysine.

It belongs to the enoyl-CoA hydratase/isomerase family. As to quaternary structure, homohexamer; dimer of trimers. Detected in liver (at protein level).

The protein localises to the mitochondrion matrix. The catalysed reaction is a (3S)-3-hydroxyacyl-CoA = a (2E)-enoyl-CoA + H2O. It catalyses the reaction a (3E)-enoyl-CoA = a 4-saturated (2E)-enoyl-CoA. The enzyme catalyses (3E)-hexenoyl-CoA = (2E)-hexenoyl-CoA. It carries out the reaction (3S)-3-hydroxybutanoyl-CoA = (2E)-butenoyl-CoA + H2O. The catalysed reaction is 3-hydroxyisovaleryl-CoA = 3-methylbut-2-enoyl-CoA + H2O. It catalyses the reaction 3-hydroxypropanoyl-CoA = acryloyl-CoA + H2O. The enzyme catalyses 3-hydroxybutanoyl-CoA = (2E)-butenoyl-CoA + H2O. It carries out the reaction 2-methylpropenoyl-CoA + H2O = (S)-3-hydroxyisobutanoyl-CoA. The catalysed reaction is (3S)-hydroxyhexanoyl-CoA = (2E)-hexenoyl-CoA + H2O. It catalyses the reaction (3S)-hydroxydecanoyl-CoA = (2E)-decenoyl-CoA + H2O. It participates in lipid metabolism; fatty acid beta-oxidation. In terms of biological role, converts unsaturated trans-2-enoyl-CoA species ((2E)-enoyl-CoA) to the corresponding 3(S)-3-hydroxyacyl-CoA species through addition of a water molecule to the double bond. Catalyzes the hydration of medium- and short-chained fatty enoyl-CoA thioesters from 4 carbons long (C4) up to C16. Has high substrate specificity for crotonyl-CoA ((2E)-butenoyl-CoA) and moderate specificity for acryloyl-CoA, 3-methylcrotonyl-CoA (3-methyl-(2E)-butenoyl-CoA) and methacrylyl-CoA ((2E)-2-methylpropenoyl-CoA). Can bind tiglyl-CoA (2-methylcrotonoyl-CoA), but hydrates only a small amount of this substrate. Plays a key role in the beta-oxidation spiral of short- and medium-chain fatty acid oxidation. At a lower rate than the hydratase reaction, catalyzes the isomerase reaction of trans-3-enoyl-CoA species (such as (3E)-hexenoyl-CoA) to trans-2-enoyl-CoA species (such as (2E)-hexenoyl-CoA), which are subsequently hydrated to 3(S)-3-hydroxyacyl-CoA species (such as (3S)-hydroxyhexanoyl-CoA). In Rattus norvegicus (Rat), this protein is Enoyl-CoA hydratase, mitochondrial.